A 373-amino-acid polypeptide reads, in one-letter code: Leucine aminopeptidase 1 (373 aa).

Residues 1 to 18 (MKLLSVLALSATATSVLG) form the signal peptide. The Zn(2+) site is built by His176 and Asp195. Residue Asn196 is glycosylated (N-linked (GlcNAc...) asparagine). The Zn(2+) site is built by Glu234 and Asp261. A glycan (N-linked (GlcNAc...) asparagine) is linked at Asn288. An intrachain disulfide couples Cys310 to Cys314. Position 343 (His343) interacts with Zn(2+). Asn348 carries N-linked (GlcNAc...) asparagine glycosylation.

Belongs to the peptidase M28 family. M28E subfamily. As to quaternary structure, monomer. The cofactor is Zn(2+).

Its subcellular location is the secreted. Activity is inhibited by EDTA, o-phenanthroline, bestatin and amastatin. Extracellular aminopeptidase which contributes to pathogenicity. The protein is Leucine aminopeptidase 1 (LAP1) of Trichophyton rubrum (Athlete's foot fungus).